A 187-amino-acid polypeptide reads, in one-letter code: Endoribonuclease YbeY (187 aa).

3 residues coordinate Zn(2+): His148, His152, and His158.

This sequence belongs to the endoribonuclease YbeY family. It depends on Zn(2+) as a cofactor.

It localises to the cytoplasm. Functionally, single strand-specific metallo-endoribonuclease involved in late-stage 70S ribosome quality control and in maturation of the 3' terminus of the 16S rRNA. This Ralstonia nicotianae (strain ATCC BAA-1114 / GMI1000) (Ralstonia solanacearum) protein is Endoribonuclease YbeY.